Reading from the N-terminus, the 1543-residue chain is ATP-binding cassette sub-family C member 2 (1543 aa).

The Extracellular portion of the chain corresponds to 1 to 26 (MDEFCNSTFWNLSLLKSPEADLPLCF). N-linked (GlcNAc...) asparagine glycans are attached at residues asparagine 6 and asparagine 11. Residues 27 to 47 (EQTVLVWIPLGFLWLLAPWQL) form a helical membrane-spanning segment. The Cytoplasmic portion of the chain corresponds to 48–67 (YRIYRSRTKRFAITKFYLAK). Residues 68-88 (QVFVVCLLILAAIDLSLALTE) traverse the membrane as a helical segment. Topologically, residues 89–92 (DTGQ) are extracellular. The chain crosses the membrane as a helical span at residues 93–113 (ATIPPVKYTNPILYLCTWLLV). Over 114-125 (LVIQHCRQCCIQ) the chain is Cytoplasmic. A helical transmembrane segment spans residues 126–146 (KNSWFLSMFWILSLLCGIFQF). The Extracellular segment spans residues 147 to 164 (QTLIRALLQDSKSNMTYS). Asparagine 160 is a glycosylation site (N-linked (GlcNAc...) asparagine). A helical transmembrane segment spans residues 165–185 (CLFFVSYGFQIVILILSAFSE). Residues 186–311 (SSDSTHAPSA…DFPKSWLVKA (126 aa)) are Cytoplasmic-facing. The segment at 260-285 (LKKSQQSPEGTSHGLTKKQSQSQDVL) is disordered. Residues 263 to 283 (SQQSPEGTSHGLTKKQSQSQD) show a composition bias toward polar residues. Phosphoserine occurs at positions 279 and 281. The helical transmembrane segment at 312-332 (LFKTFYVVILKSFILKLAHDI) threads the bilayer. An ABC transmembrane type-1 1 domain is found at 320 to 603 (ILKSFILKLA…LPMVISSVIQ (284 aa)). Topologically, residues 333–358 (LLFLNPQLLKFLIGFVKDPDSYPWVG) are extracellular. A helical membrane pass occupies residues 359–379 (YIYAILMFSVTLIQSFFLQCY). Over 380-435 (FQFCFVLGMTVRTTIIASVYKKALTLSNLARRQYTIGETVNLMSVDSQKLMDVTNY) the chain is Cytoplasmic. Residues 436 to 456 (IHLLWSSVLQIALSIFFLWRE) traverse the membrane as a helical segment. Topologically, residues 457-459 (LGP) are extracellular. A helical membrane pass occupies residues 460-480 (SILAGVGLMVLLVPVNGVLAT). The Cytoplasmic portion of the chain corresponds to 481-542 (KIRKIQVQNM…NLLRFSQLQT (62 aa)). A helical transmembrane segment spans residues 543 to 563 (ILIFILHLTPTLVSVITFSVY). Residues 564–585 (VLVDSQNVLNAEKAFTSITLFN) are Extracellular-facing. The chain crosses the membrane as a helical span at residues 586–606 (ILRFPLAMLPMVISSVIQASV). Residues 607–969 (SVDRLEQYLG…VKFSIYLKYL (363 aa)) lie on the Cytoplasmic side of the membrane. Residues 635-859 (VQFSEASFTW…KGVFAKNWKT (225 aa)) form the ABC transporter 1 domain. Position 669-676 (669-676 (GTVGSGKS)) interacts with ATP. Serine 876 carries the phosphoserine modification. A disordered region spans residues 903-927 (RENSLRRTLSRSSRSGSRRGKSLKS). A compositionally biased stretch (low complexity) spans 908-917 (RRTLSRSSRS). Phosphoserine is present on residues serine 924 and serine 928. The helical transmembrane segment at 970 to 990 (QAVGWWSLLFIVIFYVLNYVA) threads the bilayer. The 286-residue stretch at 977–1262 (LLFIVIFYVL…LVRMTSEVET (286 aa)) folds into the ABC transmembrane type-1 2 domain. At 991–1031 (FIGTNLWLSAWTSDSEKQNGTDNSPSQRDMRIGVFGALGIA) the chain is on the extracellular side. The N-linked (GlcNAc...) asparagine glycan is linked to asparagine 1009. Residues 1032 to 1052 (QGIFLLSSSLWSIYACRNASK) traverse the membrane as a helical segment. Over 1053 to 1095 (TLHRQLLTNILRAPMSFFDTTPTGRIVNRFAGDISTVDDTLPQ) the chain is Cytoplasmic. The helical transmembrane segment at 1096 to 1116 (TLRSWLLCFFGIVSTLVMICM) threads the bilayer. Position 1117 (alanine 1117) is a topological domain, extracellular. The helical transmembrane segment at 1118–1138 (TPIFIIIIIPLSILYVSVQVF) threads the bilayer. Over 1139–1209 (YVATSRQLRR…TSNRWLAIRL (71 aa)) the chain is Cytoplasmic. A helical membrane pass occupies residues 1210 to 1230 (ELVGNLIVFCSALLLVIYKNS). Topologically, residues 1231-1232 (LT) are extracellular. The chain crosses the membrane as a helical span at residues 1233-1253 (GDTVGFVLSNALNITQTLNWL). The Cytoplasmic portion of the chain corresponds to 1254–1543 (VRMTSEVETN…GIESVNHTEL (290 aa)). Residues 1298–1532 (IQFNNYQVRY…MGPFYLMAKE (235 aa)) enclose the ABC transporter 2 domain. 1332-1339 (GRTGAGKS) contacts ATP. Residue serine 1436 is modified to Phosphoserine.

Belongs to the ABC transporter superfamily. ABCC family. Conjugate transporter (TC 3.A.1.208) subfamily. Expressed in liver.

It localises to the apical cell membrane. The enzyme catalyses an S-substituted glutathione(in) + ATP + H2O = an S-substituted glutathione(out) + ADP + phosphate + H(+). It carries out the reaction taurolithocholate 3-sulfate(in) + ATP + H2O = taurolithocholate 3-sulfate(out) + ADP + phosphate + H(+). The catalysed reaction is ATP + H2O + xenobioticSide 1 = ADP + phosphate + xenobioticSide 2.. It catalyses the reaction leukotriene C4(in) + ATP + H2O = leukotriene C4(out) + ADP + phosphate + H(+). The enzyme catalyses 17beta-estradiol 17-O-(beta-D-glucuronate)(in) + ATP + H2O = 17beta-estradiol 17-O-(beta-D-glucuronate)(out) + ADP + phosphate + H(+). It carries out the reaction (4Z,15Z)-bilirubin IXalpha C8-beta-D-glucuronoside(in) + ATP + H2O = (4Z,15Z)-bilirubin IXalpha C8-beta-D-glucuronoside(out) + ADP + phosphate + H(+). The catalysed reaction is (4Z,15Z)-bilirubin IXalpha C8,C12-beta-D-bisglucuronoside(in) + ATP + H2O = (4Z,15Z)-bilirubin IXalpha C8,C12-beta-D-bisglucuronoside(out) + ADP + phosphate + H(+). In terms of biological role, ATP-dependent transporter of the ATP-binding cassette (ABC) family that binds and hydrolyzes ATP to enable active transport of various substrates including many drugs, toxicants and endogenous compound across cell membranes. Transports a wide variety of conjugated organic anions such as sulfate-, glucuronide- and glutathione (GSH)-conjugates of endo- and xenobiotics substrates. Mediates hepatobiliary excretion of mono- and bis-glucuronidated bilirubin molecules and therefore play an important role in bilirubin detoxification. Mediates also hepatobiliary excretion of others glucuronide conjugates such as 17beta-estradiol 17-glucosiduronic acid and leukotriene C4. Transports sulfated bile salt such as taurolithocholate sulfate. Transports various anticancer drugs, such as anthracycline, vinca alkaloid and methotrexate and HIV-drugs such as protease inhibitors. The sequence is that of ATP-binding cassette sub-family C member 2 from Mus musculus (Mouse).